A 607-amino-acid polypeptide reads, in one-letter code: Elongation factor 4 (607 aa).

The 183-residue stretch at 11–193 (SKIRNFSIIA…QIVEKVPAPT (183 aa)) folds into the tr-type G domain. Residues 23-28 (DHGKST) and 140-143 (NKID) contribute to the GTP site.

It belongs to the TRAFAC class translation factor GTPase superfamily. Classic translation factor GTPase family. LepA subfamily.

It is found in the cell membrane. The enzyme catalyses GTP + H2O = GDP + phosphate + H(+). Functionally, required for accurate and efficient protein synthesis under certain stress conditions. May act as a fidelity factor of the translation reaction, by catalyzing a one-codon backward translocation of tRNAs on improperly translocated ribosomes. Back-translocation proceeds from a post-translocation (POST) complex to a pre-translocation (PRE) complex, thus giving elongation factor G a second chance to translocate the tRNAs correctly. Binds to ribosomes in a GTP-dependent manner. The chain is Elongation factor 4 from Bacillus cereus (strain ATCC 10987 / NRS 248).